A 307-amino-acid polypeptide reads, in one-letter code: tRNA pseudouridine synthase B (307 aa).

Asp38 serves as the catalytic Nucleophile.

It belongs to the pseudouridine synthase TruB family. Type 1 subfamily.

The catalysed reaction is uridine(55) in tRNA = pseudouridine(55) in tRNA. Responsible for synthesis of pseudouridine from uracil-55 in the psi GC loop of transfer RNAs. The protein is tRNA pseudouridine synthase B of Bacillus anthracis.